Consider the following 210-residue polypeptide: MSGPGTPFVIGVAGGSGSGKTTVTRRVIETVGREGVAVLNQDNYYRDQSDIPFESRLHTNYDHPAAFDWALLREQLDALLAGVPIEMPEYDFTQHTRAAHTTRVLPGRVVVLEGFFALYDEELRSRMGLKVFVDADADVRFIRRLLRDTQERGRTPESVIEQYLGFVRPMHLSFVEPTKRYADVIIPHGGMNEPALDMLAARIRVMAQRD.

An ATP-binding site is contributed by 14–21; that stretch reads GGSGSGKT.

This sequence belongs to the uridine kinase family.

The protein resides in the cytoplasm. The catalysed reaction is uridine + ATP = UMP + ADP + H(+). It carries out the reaction cytidine + ATP = CMP + ADP + H(+). It participates in pyrimidine metabolism; CTP biosynthesis via salvage pathway; CTP from cytidine: step 1/3. The protein operates within pyrimidine metabolism; UMP biosynthesis via salvage pathway; UMP from uridine: step 1/1. The polypeptide is Uridine kinase (Deinococcus radiodurans (strain ATCC 13939 / DSM 20539 / JCM 16871 / CCUG 27074 / LMG 4051 / NBRC 15346 / NCIMB 9279 / VKM B-1422 / R1)).